The following is a 163-amino-acid chain: uncharacterized protein (163 aa).

Disordered stretches follow at residues methionine 1–serine 78 and proline 115–histidine 163.

This is an uncharacterized protein from Homo sapiens (Human).